Consider the following 346-residue polypeptide: Structure-specific endonuclease subunit SLX1 (346 aa).

One can recognise a GIY-YIG domain in the interval 10–92 (ALYCVYILRS…TNPHTSLHIP (83 aa)). The SLX1-type zinc finger occupies 238-296 (CVVCKEEIDPEEGGLHAVCSNEGCEGVGHLRCWGRYLLKSEEGGGEGAILPVGGRCPRC). Basic residues predominate over residues 324-336 (KVKRKRAPRKKTA). Residues 324–346 (KVKRKRAPRKKTAKTKETREEDG) form a disordered region. A compositionally biased stretch (basic and acidic residues) spans 337 to 346 (KTKETREEDG).

It belongs to the SLX1 family. In terms of assembly, forms a heterodimer with SLX4. Requires a divalent metal cation as cofactor.

Its subcellular location is the nucleus. Catalytic subunit of the SLX1-SLX4 structure-specific endonuclease that resolves DNA secondary structures generated during DNA repair and recombination. Has endonuclease activity towards branched DNA substrates, introducing single-strand cuts in duplex DNA close to junctions with ss-DNA. The chain is Structure-specific endonuclease subunit SLX1 from Podospora anserina (strain S / ATCC MYA-4624 / DSM 980 / FGSC 10383) (Pleurage anserina).